A 609-amino-acid polypeptide reads, in one-letter code: Leukotriene A-4 hydrolase (609 aa).

Residues 131-133 (QCQ) and 263-268 (PYGGME) each bind a peptide. H292 is a Zn(2+) binding site. The active-site Proton acceptor is the E293. Zn(2+)-binding residues include H296 and E315. Y380 functions as the Proton donor in the catalytic mechanism. Residue 560 to 562 (RMK) coordinates a peptide.

It belongs to the peptidase M1 family. Homodimer. The cofactor is Zn(2+). As to expression, expressed in oocytes.

It localises to the cytoplasm. The catalysed reaction is Release of the N-terminal residue from a tripeptide.. It carries out the reaction leukotriene A4 + H2O = leukotriene B4. It participates in lipid metabolism; leukotriene B4 biosynthesis. With respect to regulation, the epoxide hydrolase activity is mildly restrained by suicide inactivation, possibly involving binding of LTA4 to Tyr-380. Its function is as follows. Bifunctional zinc metalloenzyme that comprises both epoxide hydrolase (EH) and aminopeptidase activities. Acts as an epoxide hydrolase to catalyze the conversion of leukotriene A4 (LTA4) to the pro-inflammatory mediator leukotriene B4 (LTB4). During the conversion of LTA4 to LTB4, a second product is formed, the isomeric delta6-trans-delta8-cis-LTB4 (5S,12R-dihydroxy-6,10-trans-8,14-cis-eicosatetraenoic acid), with a relative formation of 10% delta6-trans-delta8-cis-LTB4 compared to 90% LTB4. The production of delta6-trans-delta8-cis-LTB4 seems to depend on the phenylalanine residue at position 375. Also has aminopeptidase activity. The sequence is that of Leukotriene A-4 hydrolase from Xenopus laevis (African clawed frog).